The chain runs to 76 residues: Signal recognition particle 9 kDa protein (76 aa).

The protein belongs to the SRP9 family. Heterodimer with SRP14; binds RNA as heterodimer. Component of a signal recognition particle complex that consists of a 7SL RNA molecule of 300 nucleotides and six protein subunits: srpa-72, srpa-68, SRP54, F37F2.2/SRP19, F25G6.8/SRP14 and ZK512.4/SRP9.

It is found in the cytoplasm. Component of the signal recognition particle (SRP) complex, a ribonucleoprotein complex that mediates the cotranslational targeting of secretory and membrane proteins to the endoplasmic reticulum (ER). SRP9 together with SRP14 and the Alu portion of the SRP RNA, constitutes the elongation arrest domain of SRP. The complex of SRP9 and SRP14 is required for SRP RNA binding. The chain is Signal recognition particle 9 kDa protein from Caenorhabditis elegans.